We begin with the raw amino-acid sequence, 441 residues long: Importin subunit alpha-8 (441 aa).

8 ARM repeats span residues 39–79 (QRDI…NIAV), 80–118 (DNPG…NVAG), 121–158 (IHYR…NLCR), 160–199 (KPHP…HLSE), 202–241 (EDGI…AMTA), 244–284 (HQQT…NITA), 287–326 (KEQI…NMAL), and 330–370 (HDQI…NMLK).

Belongs to the importin alpha family. As to quaternary structure, forms a complex with importin subunit beta-1.

It localises to the nucleus envelope. Binds to conventional NLS motifs and mediates nuclear protein import across the nuclear envelope. The protein is Importin subunit alpha-8 of Arabidopsis thaliana (Mouse-ear cress).